Here is a 134-residue protein sequence, read N- to C-terminus: Small ribosomal subunit protein uS8c (134 aa).

Belongs to the universal ribosomal protein uS8 family. In terms of assembly, part of the 30S ribosomal subunit.

The protein resides in the plastid. Its subcellular location is the chloroplast. One of the primary rRNA binding proteins, it binds directly to 16S rRNA central domain where it helps coordinate assembly of the platform of the 30S subunit. In Cucumis sativus (Cucumber), this protein is Small ribosomal subunit protein uS8c (rps8).